The primary structure comprises 567 residues: TPR repeat-containing protein MJ1428 (567 aa).

TPR repeat units follow at residues 14–47 (YEDWVTEANYYLDEGIYDKAVECYLKALEKKNTN), 48–81 (PIDWFNLAYALYHLEKYDSALEAINEALKISPSN), 83–115 (YFAYLKGLIHYKRGEIILAYKYLKKASEKIKNE), 116–148 (ELFEILGDISVKYGRYEEALKYYLKSYKMANSK), 150–183 (LNALFKAGKIYLLFGDIDKAYDAFNEILQQNPSH), 199–234 (INSYEDLNNGLTMIKNKDYIGALKIFNKVLQIDENS), 236–268 (ISYYYKSVIAEIFEEYKKALEYIDKSISIFNRS), 269–301 (LYYAKKGDILYKLGDEEGAIEAYNKAIKLNSQN), 303–335 (YAYFGLAILYYRKGELEKSSNFFDKVLETYLEE), 344–379 (LNLYSLIGKAETTGIPKYYHEAMKYVDNLINLENSS), 380–412 (RWWYVKGYIYYKLGNYKDAYESFMNALRVNPKD), 414–446 (STLKSLAIVLEKSGKIDEAITTYTKILKIVNSL), and 505–538 (AYIYLSFIESYISLDEISQMVNDIKSKLSLEMYR).

This Methanocaldococcus jannaschii (strain ATCC 43067 / DSM 2661 / JAL-1 / JCM 10045 / NBRC 100440) (Methanococcus jannaschii) protein is TPR repeat-containing protein MJ1428.